The following is a 252-amino-acid chain: 5-oxoprolinase subunit A (252 aa).

This sequence belongs to the LamB/PxpA family. In terms of assembly, forms a complex composed of PxpA, PxpB and PxpC.

It carries out the reaction 5-oxo-L-proline + ATP + 2 H2O = L-glutamate + ADP + phosphate + H(+). In terms of biological role, catalyzes the cleavage of 5-oxoproline to form L-glutamate coupled to the hydrolysis of ATP to ADP and inorganic phosphate. The sequence is that of 5-oxoprolinase subunit A from Mycobacterium leprae (strain Br4923).